Here is a 386-residue protein sequence, read N- to C-terminus: Protein phosphatase methylesterase 1 (386 aa).

A disordered region spans residues 1–38; the sequence is MSALEKSMHLGRLPSRPPLPGSGGSQSGAKMRMGPGRK. Phosphoserine is present on Ser-15. Arg-16 carries the asymmetric dimethylarginine; alternate modification. Omega-N-methylarginine; alternate is present on Arg-16. Catalysis depends on residues Ser-156 and Asp-181. The span at 255–265 shows a compositional bias: acidic residues; sequence IEEEEEDEEGS. The segment at 255–280 is disordered; it reads IEEEEEDEEGSESVNKRKKEDDMETK. A compositionally biased stretch (basic and acidic residues) spans 268–280; it reads VNKRKKEDDMETK. The active site involves His-349.

This sequence belongs to the AB hydrolase superfamily. As to quaternary structure, binds PPP2CA and PPP2CB. In terms of processing, phosphorylated by SIK1 following increases in intracellular sodium, leading to dissociation from the protein phosphatase 2A (PP2A) complex and subsequent dephosphorylation of sodium/potassium-transporting ATPase ATP1A1. As to expression, ubiquitous. Highly expressed in testis and brain.

It catalyses the reaction [phosphatase 2A protein]-C-terminal L-leucine methyl ester + H2O = [phosphatase 2A protein]-C-terminal L-leucine + methanol + H(+). Demethylates proteins that have been reversibly carboxymethylated. Demethylates PPP2CB (in vitro) and PPP2CA. Binding to PPP2CA displaces the manganese ion and inactivates the enzyme. This is Protein phosphatase methylesterase 1 (Ppme1) from Mus musculus (Mouse).